We begin with the raw amino-acid sequence, 116 residues long: uncharacterized protein (116 aa).

Residues 1-15 (MKKYFLILASFMLVA) form the signal peptide.

This is an uncharacterized protein from Haemophilus influenzae (strain ATCC 51907 / DSM 11121 / KW20 / Rd).